The sequence spans 668 residues: Transketolase (668 aa).

His-28 contacts substrate. Residues His-68 and 116–118 (GPL) each bind thiamine diphosphate. Residue Asp-157 participates in Mg(2+) binding. Positions 158 and 187 each coordinate thiamine diphosphate. Positions 187 and 189 each coordinate Mg(2+). His-263, Arg-358, and Ser-385 together coordinate substrate. Thiamine diphosphate is bound at residue His-263. The active-site Proton donor is Glu-412. Phe-438 contacts thiamine diphosphate. 4 residues coordinate substrate: His-462, Asp-470, His-474, and Arg-521.

This sequence belongs to the transketolase family. As to quaternary structure, homodimer. The cofactor is Mg(2+). Thiamine diphosphate is required as a cofactor.

The catalysed reaction is D-sedoheptulose 7-phosphate + D-glyceraldehyde 3-phosphate = aldehydo-D-ribose 5-phosphate + D-xylulose 5-phosphate. Catalyzes the transfer of a two-carbon ketol group from a ketose donor to an aldose acceptor, likely via a covalent intermediate with the cofactor thiamine pyrophosphate. Can use L-erythrulose as donor and D-ribose-5-phosphate as acceptor substrates, forming glycolaldehyde and D-sedoheptulose-7-phosphate. For synthetic purposes, is able to use hydroxypyruvate (HPA) as donor substrate, making the reaction irreversible due to the release of carbon dioxide, and various aldehydes as acceptor substrates, which leads to the corresponding ketoses. Thus, using hydroxypyruvate as donor and three different aldehydes as acceptors, i.e. glycolaldehyde, D-glyceraldehyde and butyraldehyde, the enzyme stereoselectively forms the corresponding products L-erythrulose, D-xylulose and (3S)-1,3-dihydroxyhexan-2-one, respectively. In Geobacillus stearothermophilus (Bacillus stearothermophilus), this protein is Transketolase.